We begin with the raw amino-acid sequence, 254 residues long: Translation initiation factor 2 subunit alpha (254 aa).

One can recognise an S1 motif domain in the interval 10–81; the sequence is GDLVVVKITE…ERKNVDLSLK (72 aa).

This sequence belongs to the eIF-2-alpha family. Heterotrimer composed of an alpha, a beta and a gamma chain.

Its function is as follows. eIF-2 functions in the early steps of protein synthesis by forming a ternary complex with GTP and initiator tRNA. This chain is Translation initiation factor 2 subunit alpha, found in Thermoplasma volcanium (strain ATCC 51530 / DSM 4299 / JCM 9571 / NBRC 15438 / GSS1).